We begin with the raw amino-acid sequence, 206 residues long: Ras-related protein Rab-18 (206 aa).

The residue at position 1 (M1) is an N-acetylmethionine. S17, G20, K21, S22, S23, D34, P35, T40, G66, K123, and D125 together coordinate GTP. S22 serves as a coordination point for Mg(2+). 2 short sequence motifs (switch) span residues 31–45 and 63–80; these read DTFD…GVDF and DTAG…YYRG. A Mg(2+)-binding site is contributed by T40. The residue at position 144 (S144) is a Phosphoserine. GTP is bound at residue A152. A lipid anchor (S-palmitoyl cysteine) is attached at C199. Position 203 is a cysteine methyl ester (C203). C203 is lipidated: S-geranylgeranyl cysteine. Positions 204–206 are cleaved as a propeptide — removed in mature form; sequence SVL.

This sequence belongs to the small GTPase superfamily. Rab family. As to quaternary structure, interacts (in GTP-bound form) with ZFYVE1. Interacts with ZW10 and this interaction is enhanced in the presence of ZFYVE1. Interacts with BSCL2. Requires Mg(2+) as cofactor.

It localises to the endoplasmic reticulum membrane. The protein localises to the golgi apparatus. The protein resides in the cis-Golgi network membrane. It is found in the lipid droplet. Its subcellular location is the apical cell membrane. The catalysed reaction is GTP + H2O = GDP + phosphate + H(+). Its activity is regulated as follows. Regulated by guanine nucleotide exchange factors (GEFs) which promote the exchange of bound GDP for free GTP. Regulated by GTPase activating proteins (GAPs) which increase the GTP hydrolysis activity at the ER membrane. Inhibited by GDP dissociation inhibitors (GDIs) which prevent Rab-GDP dissociation. Its function is as follows. The small GTPases Rab are key regulators of intracellular membrane trafficking, from the formation of transport vesicles to their fusion with membranes. Rabs cycle between an inactive GDP-bound form and an active GTP-bound form that is able to recruit to membranes different sets of downstream effectors directly responsible for vesicle formation, movement, tethering and fusion. RAB18 is required for the localization of ZFYVE1 to lipid droplets and for its function in mediating the formation of endoplasmic reticulum-lipid droplets (ER-LD) contacts. Also required for maintaining endoplasmic reticulum structure. Plays a role in apical endocytosis/recycling. Plays a key role in eye and brain development and neurodegeneration. This chain is Ras-related protein Rab-18, found in Rattus norvegicus (Rat).